We begin with the raw amino-acid sequence, 405 residues long: Growth/differentiation factor 11 (405 aa).

Positions 1 to 24 (MVLAAPLLLGFLLLALELRPRGEA) are cleaved as a signal peptide. The propeptide occupies 25–296 (AEGPAAAAAA…VLENTKRSRR (272 aa)). The N-linked (GlcNAc...) asparagine glycan is linked to N92. 4 cysteine pairs are disulfide-bonded: C302–C312, C311–C370, C339–C402, and C343–C404.

This sequence belongs to the TGF-beta family. Homodimer; disulfide-linked. Interacts directly with ACVR2B. Interacts directly with ACVR2A. Interacts with ACVR1B, TGFBR1 and ACVR1C in an ACVR2B-dependent manner. Interacts with FST isoform 2/FS288. Post-translationally, synthesized as large precursor molecule that undergoes proteolytic cleavage by furin-like proteases. This produces an inactive form consisting of the mature C-terminal portion non-covalently bound to its cleaved N-terminal propeptide. Activation of the mature form requires additional cleavage of the propeptide by a tolloid-like metalloproteinase.

The protein localises to the secreted. Functionally, secreted signal that acts globally to regulate anterior/posterior axial patterning during development. May play critical roles in patterning both mesodermal and neural tissues. It is required for proper vertebral patterning and orofacial development. Signals through activin receptors type-2, ACVR2A and ACVR2B, and activin receptors type-1, ACVR1B, ACVR1C and TGFBR1 leading to the phosphorylation of SMAD2 and SMAD3. This Rattus norvegicus (Rat) protein is Growth/differentiation factor 11 (Gdf11).